Reading from the N-terminus, the 211-residue chain is Ribosomal RNA small subunit methyltransferase G (211 aa).

Residues glycine 73, 126–127 (IE), and arginine 142 each bind S-adenosyl-L-methionine.

This sequence belongs to the methyltransferase superfamily. RNA methyltransferase RsmG family.

It is found in the cytoplasm. The catalysed reaction is guanosine(527) in 16S rRNA + S-adenosyl-L-methionine = N(7)-methylguanosine(527) in 16S rRNA + S-adenosyl-L-homocysteine. In terms of biological role, specifically methylates the N7 position of guanine in position 527 of 16S rRNA. The chain is Ribosomal RNA small subunit methyltransferase G from Methylorubrum extorquens (strain CM4 / NCIMB 13688) (Methylobacterium extorquens).